The chain runs to 151 residues: Probable chemoreceptor glutamine deamidase CheD (151 aa).

It belongs to the CheD family.

The catalysed reaction is L-glutaminyl-[protein] + H2O = L-glutamyl-[protein] + NH4(+). Functionally, probably deamidates glutamine residues to glutamate on methyl-accepting chemotaxis receptors (MCPs), playing an important role in chemotaxis. The chain is Probable chemoreceptor glutamine deamidase CheD from Methanosarcina barkeri (strain Fusaro / DSM 804).